The following is a 21-amino-acid chain: Dahlein-5.4 (21 aa).

As to expression, expressed by the skin dorsal glands.

The protein resides in the secreted. In terms of biological role, has no antimicrobial activity. Strongly inhibits the formation of NO by neuronal nitric oxide synthase at micromolar concentrations. This chain is Dahlein-5.4, found in Ranoidea dahlii (Dahl's aquatic frog).